The primary structure comprises 432 residues: Ornithine decarboxylase 1A, chloroplastic (432 aa).

Lys95 bears the N6-(pyridoxal phosphate)lysine mark. Residues Ser227, Gly265, and 298–301 (EPGR) each bind pyridoxal 5'-phosphate. Residue 341–342 (YD) coordinates substrate. Residue Cys377 is the Proton donor; shared with dimeric partner of the active site. Asp378 lines the substrate pocket. A pyridoxal 5'-phosphate-binding site is contributed by Tyr406.

This sequence belongs to the Orn/Lys/Arg decarboxylase class-II family. As to quaternary structure, homodimer. Only the dimer is catalytically active, as the active sites are constructed of residues from both monomers. Pyridoxal 5'-phosphate is required as a cofactor.

The protein localises to the plastid. The protein resides in the chloroplast. The enzyme catalyses L-ornithine + H(+) = putrescine + CO2. The protein operates within alkaloid biosynthesis; nicotine biosynthesis. Its pathway is amine and polyamine biosynthesis; putrescine biosynthesis via L-ornithine pathway; putrescine from L-ornithine: step 1/1. Its function is as follows. Involved in the biosynthesis of pyridine alkaloid natural products, leading mainly to the production of anabasine, anatabine, nicotine and nornicotine, effective deterrents against herbivores with antiparasitic and pesticide properties (neurotoxins); nornicotine serves as the precursor in the synthesis of the carcinogen compound N'-nitrosonornicotine (NNN). Catalyzes the first and rate-limiting step of polyamine biosynthesis that converts ornithine into putrescine, which is the precursor for the polyamines, spermidine and spermine. Polyamines are essential for cell proliferation and are implicated in cellular processes, ranging from DNA replication to apoptosis. The polypeptide is Ornithine decarboxylase 1A, chloroplastic (Nicotiana tabacum (Common tobacco)).